A 296-amino-acid polypeptide reads, in one-letter code: Cytidine deaminase (296 aa).

2 consecutive CMP/dCMP-type deaminase domains span residues 52–172 (TAVE…FGPK) and 191–296 (THAD…YFAL). Residue 93-95 (NQE) coordinates substrate. Histidine 106 serves as a coordination point for Zn(2+). The active-site Proton donor is the glutamate 108. Positions 133 and 136 each coordinate Zn(2+).

It belongs to the cytidine and deoxycytidylate deaminase family. In terms of assembly, homodimer. The cofactor is Zn(2+).

It catalyses the reaction cytidine + H2O + H(+) = uridine + NH4(+). The enzyme catalyses 2'-deoxycytidine + H2O + H(+) = 2'-deoxyuridine + NH4(+). In terms of biological role, this enzyme scavenges exogenous and endogenous cytidine and 2'-deoxycytidine for UMP synthesis. This is Cytidine deaminase from Actinobacillus succinogenes (strain ATCC 55618 / DSM 22257 / CCUG 43843 / 130Z).